The following is a 1037-amino-acid chain: Sodium/potassium exporting P-type ATPase cta3 (1037 aa).

The Cytoplasmic portion of the chain corresponds to 1–61 (MVTINISNPV…GVSAWKVLLR (61 aa)). A helical transmembrane segment spans residues 62–82 (QVLNAMCVVLILAAALSFGTT). Aspartate 83 is a topological domain (extracellular). The helical transmembrane segment at 84-104 (WIEGGVISAIIVLNITVGFIQ) threads the bilayer. Residues 105-281 (EYKAEKTMDS…LNVGTPLQRK (177 aa)) are Cytoplasmic-facing. The helical transmembrane segment at 282–302 (LTVLAYILFCIAIILAIIVMA) threads the bilayer. The Extracellular segment spans residues 303–313 (AHSFHVTNEVS). Residues 314-334 (IYAISLGISIIPESLIAVLSI) traverse the membrane as a helical segment. At 335–760 (TMAMGQKNMS…GRRMFDNIMR (426 aa)) the chain is on the cytoplasmic side. Aspartate 368 (4-aspartylphosphate intermediate) is an active-site residue. Aspartate 368 and threonine 370 together coordinate Mg(2+). 9 residues coordinate ATP: threonine 370, glutamate 468, lysine 520, arginine 559, threonine 620, glycine 621, aspartate 622, arginine 678, and lysine 684. Aspartate 703 is a binding site for Mg(2+). Asparagine 706 lines the ATP pocket. Residues 761–781 (FVLHLLVSNVGEVILLVVGLA) form a helical membrane-spanning segment. At 782–787 (FRDEVH) the chain is on the extracellular side. A helical transmembrane segment spans residues 788–808 (LSVFPMSPVEILWCNMITSSF). Residues 809 to 844 (PSMGLGMELAQPDVMERLPHDNKVGIFQKSLIVDMM) are Cytoplasmic-facing. Residues 845–865 (VYGFFLGVVSLMTWVVIMYGF) form a helical membrane-spanning segment. The Extracellular segment spans residues 866–889 (GTGNLSYDCNAHYHAGCNDVFKAR). N-linked (GlcNAc...) asparagine glycosylation is present at asparagine 869. Residues 890-910 (SAVFAVVTFCILIMAVEVKNF) traverse the membrane as a helical segment. The Cytoplasmic portion of the chain corresponds to 911-939 (DNSLFNLHGIPWGEWNFRYFLHTLVENKF). The helical transmembrane segment at 940 to 960 (LAWAIALAAVSVFPTIYIPVI) threads the bilayer. Over 961–969 (NRDVFKHTY) the chain is Extracellular. Residues 970–990 (IGWEWGVVAVAVMFYFFYVEI) traverse the membrane as a helical segment. Topologically, residues 991–1037 (WKSIRRSLTNPQKKGKFRRTLSNTITTESKLSEKDLEHRLFLQSRRA) are cytoplasmic. Serine 1012 is modified (phosphoserine).

The protein belongs to the cation transport ATPase (P-type) (TC 3.A.3) family. Type IID subfamily. Mg(2+) is required as a cofactor. Post-translationally, the active site is phosphorylated in presence of sodium or potassium and in conditions of higher pH. Not phosphorylated in presence of calcium ions.

The protein resides in the cell membrane. It catalyses the reaction Na(+)(in) + ATP + H2O = Na(+)(out) + ADP + phosphate + H(+). The catalysed reaction is K(+)(in) + ATP + H2O = K(+)(out) + ADP + phosphate + H(+). In terms of biological role, catalyzes the hydrolysis of ATP coupled with the export of sodium and potassium from the cell. May export sodium less efficiently. May transport other cations such as lithium. Sodium/potassium efflux ATPases are involved in salt tolerance and maintaining the membrane potential across the plasma membrane in high salinity (Na+) or alkaline (K+) environments. The protein is Sodium/potassium exporting P-type ATPase cta3 of Schizosaccharomyces pombe (strain 972 / ATCC 24843) (Fission yeast).